The sequence spans 163 residues: Disulfide bond formation protein B (163 aa).

Over 1–9 (MRLASPRSL) the chain is Cytoplasmic. A helical transmembrane segment spans residues 10 to 26 (FVIAFLGSALLIAIALY). Over 27–44 (MEHVMGLAPCPLCIVQRI) the chain is Periplasmic. Cys-36 and Cys-39 are disulfide-bonded. The helical transmembrane segment at 45-61 (CVIGFGLVCLVAAIHGP) threads the bilayer. Residues 62-67 (AKVGRR) are Cytoplasmic-facing. The chain crosses the membrane as a helical span at residues 68-85 (VYAAIAALFVAAGAATAI). The Periplasmic portion of the chain corresponds to 86 to 142 (RQIWLQSVPADQLPSCLPSLEYMMEALPFQEIARLVLHGTAECAEVSWTMLGMSIPE). A disulfide bridge connects residues Cys-101 and Cys-128. A helical transmembrane segment spans residues 143–161 (WSLLGFIGMAIVCLWQLLR). Over 162-163 (RD) the chain is Cytoplasmic.

The protein belongs to the DsbB family.

The protein resides in the cell inner membrane. Required for disulfide bond formation in some periplasmic proteins. Acts by oxidizing the DsbA protein. In Stutzerimonas stutzeri (strain A1501) (Pseudomonas stutzeri), this protein is Disulfide bond formation protein B.